We begin with the raw amino-acid sequence, 157 residues long: Phosphopantetheine adenylyltransferase (157 aa).

Residue Thr10 coordinates substrate. Residues 10–11 and His18 contribute to the ATP site; that span reads TF. The substrate site is built by Lys42, Leu74, and Arg88. ATP contacts are provided by residues 89–91, Glu99, and 124–130; these read GLR and NAFISSS.

Belongs to the bacterial CoaD family. In terms of assembly, homohexamer. The cofactor is Mg(2+).

It is found in the cytoplasm. The enzyme catalyses (R)-4'-phosphopantetheine + ATP + H(+) = 3'-dephospho-CoA + diphosphate. Its pathway is cofactor biosynthesis; coenzyme A biosynthesis; CoA from (R)-pantothenate: step 4/5. Reversibly transfers an adenylyl group from ATP to 4'-phosphopantetheine, yielding dephospho-CoA (dPCoA) and pyrophosphate. This is Phosphopantetheine adenylyltransferase from Helicobacter pylori (strain P12).